Here is a 241-residue protein sequence, read N- to C-terminus: RxLR effector protein SFI5 (241 aa).

An N-terminal signal peptide occupies residues 1–20; it reads MLRQARPLVVLIAVTFLVAS. The short motif at 44–62 is the RxLR-dEER element; the sequence is RLLRTHHATIKVNADSEER.

This sequence belongs to the RxLR effector family.

The protein resides in the secreted. The protein localises to the host cell membrane. Its function is as follows. Effector that suppresses flg22-induced post-translational MAP kinase activation in tomato but not in Arabidopsis. The perception of highly conserved pathogen- or microbe-associated molecular patterns (PAMPs/MAMPs), such as flg22, triggers converging signaling pathways recruiting MAP kinase cascades and inducing transcriptional re-programming, yielding a generic antimicrobial response. This Phytophthora infestans (strain T30-4) (Potato late blight agent) protein is RxLR effector protein SFI5.